A 400-amino-acid polypeptide reads, in one-letter code: Probable transposase for insertion sequence element ISRM3-like (400 aa).

This sequence belongs to the transposase mutator family.

Functionally, required for the transposition of the insertion element. The sequence is that of Probable transposase for insertion sequence element ISRM3-like from Sinorhizobium fredii (strain NBRC 101917 / NGR234).